A 230-amino-acid polypeptide reads, in one-letter code: DNA repair protein RecO (230 aa).

This sequence belongs to the RecO family.

Involved in DNA repair and RecF pathway recombination. This chain is DNA repair protein RecO, found in Pseudoalteromonas translucida (strain TAC 125).